Here is a 448-residue protein sequence, read N- to C-terminus: Adenylosuccinate synthetase (448 aa).

Residues 22–28 (GDEGKGK) and 50–52 (GHT) contribute to the GTP site. Asp-23 acts as the Proton acceptor in catalysis. Residues Asp-23 and Gly-50 each contribute to the Mg(2+) site. Residues 23-26 (DEGK), 48-51 (NAGH), Thr-139, Arg-153, Gln-234, Thr-249, and Arg-321 contribute to the IMP site. The Proton donor role is filled by His-51. A substrate-binding site is contributed by 317–323 (SVTGRPR). GTP is bound by residues Arg-323, 349–351 (KLD), and 431–433 (STG).

The protein belongs to the adenylosuccinate synthetase family. Homodimer. Requires Mg(2+) as cofactor.

It is found in the cytoplasm. It carries out the reaction IMP + L-aspartate + GTP = N(6)-(1,2-dicarboxyethyl)-AMP + GDP + phosphate + 2 H(+). It functions in the pathway purine metabolism; AMP biosynthesis via de novo pathway; AMP from IMP: step 1/2. Plays an important role in the de novo pathway of purine nucleotide biosynthesis. Catalyzes the first committed step in the biosynthesis of AMP from IMP. The sequence is that of Adenylosuccinate synthetase from Paraburkholderia phymatum (strain DSM 17167 / CIP 108236 / LMG 21445 / STM815) (Burkholderia phymatum).